Reading from the N-terminus, the 987-residue chain is MAERQSASSPTPSSPPQQQQQTPQQPPQYLLNSKKNFKVKVLNGREVERHPLNSITKTEDTGKPKQSSLSSNASSLQSAAAAASSSTATTDIDPLNNNNNNNTDIDPLNNPLEKKHDPLSETIATMGGLKLIKENHLTNYVDENFMPWDTLKPSILQQYTSDDSNPIQVSFMSTGTSGKIKIPINRLNKILEELEQDKEDSKSTQFSQPDIIMDLETLHSELLKAWAAEERVRSLKIAIQTAKLLSDTSLIKFYPSKFVIATEILDTFGNLVYDRIKKRLQSSKESKNHEILLKEQAKETCRNWFYKIASIRELLPRLFVEISILKCYEFIQGDVNTEPKQVINRISEMIRGIGNPLVANYIRAYLTRRSFDLCPEYKKFVIQLLKDFVFTQKSYEKSKYLENTLSMYRITLTDYMGLYSPSLEWLLQCLAHKATPETLEEVLELFRESKNSLLLNHIISSFPPEYICSNSTMFSNFIKDADTLSYPKYQLYSTFGVNLVLGQPPKNQILSILNDVWKVVTNFENIKDYISVAEVFIEYVLTHCSEKETDVFLKDILRHIIPDKGYETIQSHLQSIVLKIFTHISDFGKLVSFTNFLPLLDLFNGESQKQISRSTLEALSTSKVMTSDPILINTFLTYGKALHDSLNSLSFQDEVRQVTQLVVNCINKIDFGRDVEKQLNFYVECRQTFINFDGVKNRLVYGVCEICEKTLNLVKGKHTPKTTSFIRACVAYCFITIPSIDDIFLKMNLYLVSSSVALQNQALSQADALLKAAITFIQEIPPILEFKQVKSTEDWTISYVSDFISLLVVTPGHPESGPFYLVKALYKVIKEYQWESSSTAKSKLFIQLLLLCSSWAQTSLPYHIEKVESNDQLFTEDPEFNTELTEFYNSLIKEILYDLNLLKDEPDNLTQKKVGIICIDLINALLNVGELNSKTASLIFNLYNMAKKIIPSTCFNEITYLKNTLAFIGTLESKMGQDIFNKLSQQQ.

A compositionally biased stretch (low complexity) spans 1–23 (MAERQSASSPTPSSPPQQQQQTP). The segment at 1 to 115 (MAERQSASSP…DPLNNPLEKK (115 aa)) is disordered. The segment covering 43–63 (NGREVERHPLNSITKTEDTGK) has biased composition (basic and acidic residues). The span at 66 to 111 (QSSLSSNASSLQSAAAAASSSTATTDIDPLNNNNNNNTDIDPLNNP) shows a compositional bias: low complexity.

This sequence belongs to the VPS35L family. In terms of assembly, component of the heterotrimeric retriever complex.

Its subcellular location is the endosome. Its function is as follows. Acts as a component of the retriever complex. The retriever complex is a heterotrimeric complex related to retromer cargo-selective complex (CSC) and essential for retromer-independent retrieval and recycling of numerous cargos. In Dictyostelium discoideum (Social amoeba), this protein is VPS35 endosomal protein sorting factor-like.